The chain runs to 264 residues: tRNA (guanine-N(1)-)-methyltransferase (264 aa).

S-adenosyl-L-methionine contacts are provided by residues glycine 125 and 145–150; that span reads LGDFVL.

The protein belongs to the RNA methyltransferase TrmD family. In terms of assembly, homodimer.

It localises to the cytoplasm. The enzyme catalyses guanosine(37) in tRNA + S-adenosyl-L-methionine = N(1)-methylguanosine(37) in tRNA + S-adenosyl-L-homocysteine + H(+). Its function is as follows. Specifically methylates guanosine-37 in various tRNAs. The sequence is that of tRNA (guanine-N(1)-)-methyltransferase from Burkholderia cenocepacia (strain ATCC BAA-245 / DSM 16553 / LMG 16656 / NCTC 13227 / J2315 / CF5610) (Burkholderia cepacia (strain J2315)).